A 258-amino-acid chain; its full sequence is Protein UL24 homolog (258 aa).

This sequence belongs to the herpesviridae UL24 family.

Its subcellular location is the virion. The protein resides in the host cytoplasm. It is found in the host nucleus. The protein localises to the host nucleolus. It localises to the host Golgi apparatus. In terms of biological role, may participate in nuclear egress of viral particles. Plays a role in the dispersal of several host nucleolar proteins including NCL/nucleolin and NPM1. Since deletion of host NCL/nucleolin negatively impact on nuclear egress, UL24 supposedly acts on this process through its effect on host nucleoli. This chain is Protein UL24 homolog, found in Homo sapiens (Human).